Here is a 354-residue protein sequence, read N- to C-terminus: Fructose-bisphosphate aldolase (354 aa).

Residue Ser61 coordinates D-glyceraldehyde 3-phosphate. Asp104 acts as the Proton donor in catalysis. His105, Asp139, Glu169, and His221 together coordinate Zn(2+). Gly222 serves as a coordination point for dihydroxyacetone phosphate. Residue His260 coordinates Zn(2+). Dihydroxyacetone phosphate is bound by residues 261–263 (GGS) and 282–285 (NIDT).

The protein belongs to the class II fructose-bisphosphate aldolase family. Homodimer. Requires Zn(2+) as cofactor.

It catalyses the reaction beta-D-fructose 1,6-bisphosphate = D-glyceraldehyde 3-phosphate + dihydroxyacetone phosphate. The protein operates within carbohydrate degradation; glycolysis; D-glyceraldehyde 3-phosphate and glycerone phosphate from D-glucose: step 4/4. In terms of biological role, catalyzes the aldol condensation of dihydroxyacetone phosphate (DHAP or glycerone-phosphate) with glyceraldehyde 3-phosphate (G3P) to form fructose 1,6-bisphosphate (FBP) in gluconeogenesis and the reverse reaction in glycolysis. This is Fructose-bisphosphate aldolase (fba) from Campylobacter jejuni subsp. jejuni serotype O:2 (strain ATCC 700819 / NCTC 11168).